Here is a 912-residue protein sequence, read N- to C-terminus: Protein translocase subunit SecA (912 aa).

Residues glutamine 87, 105 to 109 (GEGKT), and aspartate 509 each bind ATP. Residues 847–859 (RERAVSQPVHEDA) show a composition bias toward basic and acidic residues. The disordered stretch occupies residues 847–912 (RERAVSQPVH…KYKHCHGKLN (66 aa)). A compositionally biased stretch (acidic residues) spans 867–878 (AESEEASGESAD). Over residues 881-892 (QPVRRDGPKVGR) the composition is skewed to basic and acidic residues. Residues cysteine 896, cysteine 898, cysteine 907, and histidine 908 each contribute to the Zn(2+) site. Basic residues predominate over residues 902–912 (KKYKHCHGKLN).

The protein belongs to the SecA family. As to quaternary structure, monomer and homodimer. Part of the essential Sec protein translocation apparatus which comprises SecA, SecYEG and auxiliary proteins SecDF-YajC and YidC. Zn(2+) is required as a cofactor.

Its subcellular location is the cell inner membrane. It is found in the cytoplasm. It catalyses the reaction ATP + H2O + cellular proteinSide 1 = ADP + phosphate + cellular proteinSide 2.. In terms of biological role, part of the Sec protein translocase complex. Interacts with the SecYEG preprotein conducting channel. Has a central role in coupling the hydrolysis of ATP to the transfer of proteins into and across the cell membrane, serving both as a receptor for the preprotein-SecB complex and as an ATP-driven molecular motor driving the stepwise translocation of polypeptide chains across the membrane. This Chromohalobacter salexigens (strain ATCC BAA-138 / DSM 3043 / CIP 106854 / NCIMB 13768 / 1H11) protein is Protein translocase subunit SecA.